Reading from the N-terminus, the 365-residue chain is Phospho-N-acetylmuramoyl-pentapeptide-transferase (365 aa).

The next 10 helical transmembrane spans lie at 22–42 (YISV…LALG), 74–94 (TMGG…WGDL), 95–115 (TSIY…IGFF), 133–153 (YKFA…FYLL), 168–188 (SLYI…IING), 201–221 (GLAI…AYIE), 240–260 (LAEV…FLWF), 267–287 (VFMG…IAVM), 292–312 (LIFF…MLQV), and 342–362 (KVVI…LAAI).

It belongs to the glycosyltransferase 4 family. MraY subfamily. Requires Mg(2+) as cofactor.

The protein resides in the cell inner membrane. It catalyses the reaction UDP-N-acetyl-alpha-D-muramoyl-L-alanyl-gamma-D-glutamyl-meso-2,6-diaminopimeloyl-D-alanyl-D-alanine + di-trans,octa-cis-undecaprenyl phosphate = di-trans,octa-cis-undecaprenyl diphospho-N-acetyl-alpha-D-muramoyl-L-alanyl-D-glutamyl-meso-2,6-diaminopimeloyl-D-alanyl-D-alanine + UMP. Its pathway is cell wall biogenesis; peptidoglycan biosynthesis. Its function is as follows. Catalyzes the initial step of the lipid cycle reactions in the biosynthesis of the cell wall peptidoglycan: transfers peptidoglycan precursor phospho-MurNAc-pentapeptide from UDP-MurNAc-pentapeptide onto the lipid carrier undecaprenyl phosphate, yielding undecaprenyl-pyrophosphoryl-MurNAc-pentapeptide, known as lipid I. This Francisella tularensis subsp. tularensis (strain FSC 198) protein is Phospho-N-acetylmuramoyl-pentapeptide-transferase.